The primary structure comprises 306 residues: Homeobox protein HMX3 (306 aa).

The segment at 95–181 is disordered; sequence HTPRTEVPDK…DKKPCRKKKT (87 aa). 2 stretches are compositionally biased toward basic and acidic residues: residues 117–143 and 153–174; these read GERD…KSPE and EEGK…PDKK. Positions 178–237 form a DNA-binding region, homeobox; sequence KKKTRTVFSRSQVFQLESTFDMKRYLSSSERAGLAASLHLTETQVKIWFQNRRNKWKRQL.

It belongs to the HMX homeobox family.

The protein localises to the nucleus. In terms of biological role, transcription factor involved in specification of neuronal cell types and which is required for inner ear and hypothalamus development. Binds to the 5'-CAAGTG-3' core sequence. May act as a stage-specific inhibitor of anf1 in the anterior neural plate during the development. The polypeptide is Homeobox protein HMX3 (hmx3) (Xenopus tropicalis (Western clawed frog)).